Here is a 98-residue protein sequence, read N- to C-terminus: Integration host factor subunit alpha (98 aa).

The segment at 52 to 71 (FDLRDKNQRPGRNPKTGEDI) is disordered.

The protein belongs to the bacterial histone-like protein family. As to quaternary structure, heterodimer of an alpha and a beta chain.

This protein is one of the two subunits of integration host factor, a specific DNA-binding protein that functions in genetic recombination as well as in transcriptional and translational control. This is Integration host factor subunit alpha from Photorhabdus laumondii subsp. laumondii (strain DSM 15139 / CIP 105565 / TT01) (Photorhabdus luminescens subsp. laumondii).